A 782-amino-acid polypeptide reads, in one-letter code: MTTTDSPSVLQDKDIDRLVNAQKKPQEEPTMKDKALLFEKQRQEKKMKHTEAKMETNPLTSAKTFRKAPTEASTATTKDSTKNVNNATSTNNATSTKNNTKNTPKNTPKNIPKNTTAKPPIPKSAMKPSVPAAAAAVSTSAATAPAATASVSVSEPAAAFSPASHDMASFMTGDTSAAIECLMNGTSTSTPQKSASGISTNKHVNAAASQVNNRSNTSNSFDSHTTQKAGSYNPNITNILSERELDSTDCYADSESRSQPHKPSVLLPTTVLTDNKTPTYPPSPEFFSDHTDARDVRVGASFVNHKQPYNFARNNHGSDVSSAMDNARRQASETRRSNLSSYNDRNQPAAHSYLRTAPNHMEKIRTEVDKEQTREKKLARERLARKQQRDKFDLLQTPQTKNKFNMQVPLDMSEEQLFEVICKLTTQLDQSQARVREVEELVQQCSEQLNERSVEIDSLKSQYEEGQGEKEMLVGQLEEQLKRVSEEKDVELRQATERMEKELNDVTATKDHEIQQLKQQVQDLTIQLSSATVSDVKTLRTDYEHYKSQCYRKDVMISELEARLQREENLEKFETELKDKEKRLIKTELRLGQQALEQDHERQKLEVEKKVLGEKDEEERLRERLRELGSRDRSYNRSSRDRSHDRLYERSPRSRDRSSRDRSRDRYSRSRSRSRYRRRSDSVKDYSVGPRDKGDLRSLALEKIIDFLLARQKAGAQRAHMDACYNVSGPGVRYGDGLSDATVEKVLKEFLNKDEGYLMDLLEGDGKRLDEYLGTIYSGVGV.

Disordered stretches follow at residues 1–127, 205–234, and 308–355; these read MTTT…SAMK, NAAA…SYNP, and PYNF…SYLR. Residues 24-54 are compositionally biased toward basic and acidic residues; it reads KPQEEPTMKDKALLFEKQRQEKKMKHTEAKM. The segment covering 82–118 has biased composition (low complexity); that stretch reads KNVNNATSTNNATSTKNNTKNTPKNTPKNIPKNTTAK. Polar residues predominate over residues 312-324; sequence ARNNHGSDVSSAM. Residues 326–336 are compositionally biased toward basic and acidic residues; the sequence is NARRQASETRR. Positions 337-346 are enriched in polar residues; it reads SNLSSYNDRN. Residues 361-628 adopt a coiled-coil conformation; sequence MEKIRTEVDK…ERLRERLREL (268 aa). The segment covering 629-668 has biased composition (basic and acidic residues); sequence GSRDRSYNRSSRDRSHDRLYERSPRSRDRSSRDRSRDRYS. The tract at residues 629–689 is disordered; sequence GSRDRSYNRS…SDSVKDYSVG (61 aa). The span at 669 to 678 shows a compositional bias: basic residues; that stretch reads RSRSRSRYRR. Over residues 679–689 the composition is skewed to basic and acidic residues; sequence RSDSVKDYSVG.

This is an uncharacterized protein from Yarrowia lipolytica (strain CLIB 122 / E 150) (Yeast).